A 240-amino-acid polypeptide reads, in one-letter code: Fibronectin type III domain-containing protein 5 (240 aa).

The segment covering 1-10 (MQAARGGAGR) has biased composition (gly residues). Residues 1–33 (MQAARGGAGRPGREGRGLERECERSPGPGVAMP) form a disordered region. Residues 11 to 24 (PGREGRGLERECER) show a composition bias toward basic and acidic residues. In terms of domain architecture, Fibronectin type-III spans 64 to 155 (APVNVTVRHL…EPVLFKTPRE (92 aa)). Residues asparagine 67 and asparagine 112 are each glycosylated (N-linked (GlcNAc...) asparagine). A helical membrane pass occupies residues 181-201 (GEVLIIVVVLFMWAGVIALFC). The span at 210–221 (NEPNNNKEKTKS) shows a compositional bias: basic and acidic residues. The segment at 210 to 240 (NEPNNNKEKTKSASETSTPEHQGGGLLRSKI) is disordered. Gly residues predominate over residues 231 to 240 (QGGGLLRSKI). The short motif at 238–240 (SKI) is the Microbody targeting signal element.

As to quaternary structure, dimer; may exist in other oligomeric forms. Post-translationally, the extracellular domain is cleaved and released from the cell membrane. In terms of processing, N-Glycosylated. In adult, it is highly expressed in skeletal muscle, heart and brain.

The protein localises to the cell membrane. It is found in the peroxisome membrane. Its subcellular location is the secreted. In terms of biological role, mediates beneficial effects of muscular exercise. Induces browning of white adipose tissue by stimulating UCP1 expression, at least in part, via the nuclear receptor PPARA. The polypeptide is Fibronectin type III domain-containing protein 5 (Fndc5) (Mus musculus (Mouse)).